We begin with the raw amino-acid sequence, 113 residues long: Protein translation factor SUI1 homolog (113 aa).

This sequence belongs to the SUI1 family.

Functionally, probably involved in translation. The protein is Protein translation factor SUI1 homolog of Salix bakko (Japanese willow).